The primary structure comprises 777 residues: Polyribonucleotide nucleotidyltransferase (777 aa).

Positions 494 and 500 each coordinate Mg(2+). One can recognise a KH domain in the interval 561 to 620; the sequence is PRIITLQIDPSKIGALIGPGGKTIRSIIEQTGAQIDVEDDGRVFVTTPDADGARMAQSLI. Residues 630–699 enclose the S1 motif domain; it reads GEIFTGKVVR…GTGKLSLSRR (70 aa). Residues 703-777 form a disordered region; the sequence is TGETAEQRKS…NDRRGGGFRG (75 aa). A compositionally biased stretch (gly residues) spans 718–727; sequence GPRGGGGGGD. 2 stretches are compositionally biased toward basic and acidic residues: residues 728-761 and 768-777; these read RGPRPGGDRGPRPEGDRGPRPEGDRPREGGDRGP and NDRRGGGFRG.

The protein belongs to the polyribonucleotide nucleotidyltransferase family. It depends on Mg(2+) as a cofactor.

The protein localises to the cytoplasm. It catalyses the reaction RNA(n+1) + phosphate = RNA(n) + a ribonucleoside 5'-diphosphate. Its function is as follows. Involved in mRNA degradation. Catalyzes the phosphorolysis of single-stranded polyribonucleotides processively in the 3'- to 5'-direction. The polypeptide is Polyribonucleotide nucleotidyltransferase (Herpetosiphon aurantiacus (strain ATCC 23779 / DSM 785 / 114-95)).